The primary structure comprises 324 residues: Phospho-N-acetylmuramoyl-pentapeptide-transferase (324 aa).

The next 10 helical transmembrane spans lie at Ala5–Ile25, Ile57–Leu77, Thr81–Ile101, Phe117–Ser137, Trp147–Ser167, Leu176–Trp196, Val203–His223, Val227–Leu247, Leu250–Ile270, and Ile302–Val322.

This sequence belongs to the glycosyltransferase 4 family. MraY subfamily. Requires Mg(2+) as cofactor.

It localises to the cell membrane. The catalysed reaction is UDP-N-acetyl-alpha-D-muramoyl-L-alanyl-gamma-D-glutamyl-meso-2,6-diaminopimeloyl-D-alanyl-D-alanine + di-trans,octa-cis-undecaprenyl phosphate = di-trans,octa-cis-undecaprenyl diphospho-N-acetyl-alpha-D-muramoyl-L-alanyl-D-glutamyl-meso-2,6-diaminopimeloyl-D-alanyl-D-alanine + UMP. It functions in the pathway cell wall biogenesis; peptidoglycan biosynthesis. Its function is as follows. Catalyzes the initial step of the lipid cycle reactions in the biosynthesis of the cell wall peptidoglycan: transfers peptidoglycan precursor phospho-MurNAc-pentapeptide from UDP-MurNAc-pentapeptide onto the lipid carrier undecaprenyl phosphate, yielding undecaprenyl-pyrophosphoryl-MurNAc-pentapeptide, known as lipid I. The chain is Phospho-N-acetylmuramoyl-pentapeptide-transferase from Geobacillus kaustophilus (strain HTA426).